The chain runs to 270 residues: 3-methyl-2-oxobutanoate hydroxymethyltransferase (270 aa).

Positions 43 and 82 each coordinate Mg(2+). 3-methyl-2-oxobutanoate contacts are provided by residues 43 to 44 (DS), Asp-82, and Lys-112. Glu-114 provides a ligand contact to Mg(2+). Catalysis depends on Glu-179, which acts as the Proton acceptor.

The protein belongs to the PanB family. As to quaternary structure, homodecamer; pentamer of dimers. Requires Mg(2+) as cofactor.

It is found in the cytoplasm. It catalyses the reaction 3-methyl-2-oxobutanoate + (6R)-5,10-methylene-5,6,7,8-tetrahydrofolate + H2O = 2-dehydropantoate + (6S)-5,6,7,8-tetrahydrofolate. The protein operates within cofactor biosynthesis; (R)-pantothenate biosynthesis; (R)-pantoate from 3-methyl-2-oxobutanoate: step 1/2. Catalyzes the reversible reaction in which hydroxymethyl group from 5,10-methylenetetrahydrofolate is transferred onto alpha-ketoisovalerate to form ketopantoate. The chain is 3-methyl-2-oxobutanoate hydroxymethyltransferase from Staphylococcus saprophyticus subsp. saprophyticus (strain ATCC 15305 / DSM 20229 / NCIMB 8711 / NCTC 7292 / S-41).